We begin with the raw amino-acid sequence, 1360 residues long: DNA-directed RNA polymerase subunit beta (1360 aa).

It belongs to the RNA polymerase beta chain family. The RNAP catalytic core consists of 2 alpha, 1 beta, 1 beta' and 1 omega subunit. When a sigma factor is associated with the core the holoenzyme is formed, which can initiate transcription.

It carries out the reaction RNA(n) + a ribonucleoside 5'-triphosphate = RNA(n+1) + diphosphate. DNA-dependent RNA polymerase catalyzes the transcription of DNA into RNA using the four ribonucleoside triphosphates as substrates. The polypeptide is DNA-directed RNA polymerase subunit beta (Vesicomyosocius okutanii subsp. Calyptogena okutanii (strain HA)).